We begin with the raw amino-acid sequence, 120 residues long: Large ribosomal subunit protein uL29 (120 aa).

This sequence belongs to the universal ribosomal protein uL29 family. Component of the large ribosomal subunit. Mature ribosomes consist of a small (40S) and a large (60S) subunit. The 40S subunit contains about 32 different proteins and 1 molecule of RNA (18S). The 60S subunit contains 45 different proteins and 3 molecules of RNA (25S, 5.8S and 5S).

The protein localises to the cytoplasm. Functionally, component of the ribosome, a large ribonucleoprotein complex responsible for the synthesis of proteins in the cell. The small ribosomal subunit (SSU) binds messenger RNAs (mRNAs) and translates the encoded message by selecting cognate aminoacyl-transfer RNA (tRNA) molecules. The large subunit (LSU) contains the ribosomal catalytic site termed the peptidyl transferase center (PTC), which catalyzes the formation of peptide bonds, thereby polymerizing the amino acids delivered by tRNAs into a polypeptide chain. The nascent polypeptides leave the ribosome through a tunnel in the LSU and interact with protein factors that function in enzymatic processing, targeting, and the membrane insertion of nascent chains at the exit of the ribosomal tunnel. The protein is Large ribosomal subunit protein uL29 of Candida albicans (strain SC5314 / ATCC MYA-2876) (Yeast).